Here is a 40-residue protein sequence, read N- to C-terminus: Chaperonin HSP60, mitochondrial (40 aa).

The protein belongs to the chaperonin (HSP60) family.

The protein resides in the mitochondrion. In terms of biological role, implicated in mitochondrial protein import and macromolecular assembly. May facilitate the correct folding of imported proteins. May also prevent misfolding and promote the refolding and proper assembly of unfolded polypeptides generated under stress conditions in the mitochondrial matrix. This Solanum tuberosum (Potato) protein is Chaperonin HSP60, mitochondrial.